The primary structure comprises 342 residues: Glycerol-1-phosphate dehydrogenase [NAD(P)+] (342 aa).

Residues 84–88 and 106–109 each bind NAD(+); these read GRPLD and TSAS. Asp-111 contacts substrate. NAD(+) is bound at residue Ser-115. Position 160 (Asp-160) interacts with substrate. The Zn(2+) site is built by Asp-160 and His-241. His-245 is a substrate binding site. Residue His-260 coordinates Zn(2+).

This sequence belongs to the glycerol-1-phosphate dehydrogenase family. As to quaternary structure, homodimer. Zn(2+) is required as a cofactor.

It localises to the cytoplasm. The enzyme catalyses sn-glycerol 1-phosphate + NAD(+) = dihydroxyacetone phosphate + NADH + H(+). It carries out the reaction sn-glycerol 1-phosphate + NADP(+) = dihydroxyacetone phosphate + NADPH + H(+). Its pathway is membrane lipid metabolism; glycerophospholipid metabolism. Catalyzes the NAD(P)H-dependent reduction of dihydroxyacetonephosphate (DHAP or glycerone phosphate) to glycerol 1-phosphate (G1P). The G1P thus generated is used as the glycerophosphate backbone of phospholipids in the cellular membranes of Archaea. In Pyrobaculum neutrophilum (strain DSM 2338 / JCM 9278 / NBRC 100436 / V24Sta) (Thermoproteus neutrophilus), this protein is Glycerol-1-phosphate dehydrogenase [NAD(P)+].